A 94-amino-acid chain; its full sequence is Protein RESPONSE TO LOW SULFUR 2 (94 aa).

Residues 15-63 (VDELRRKNGEMEKAVEEMKKEMLQLWRRTQVAEEAEERLCSQLAELEAE) are a coiled coil.

May be involved in defense responses monitoring. Probably implicated into osmotic stress signaling. This Arabidopsis thaliana (Mouse-ear cress) protein is Protein RESPONSE TO LOW SULFUR 2.